Here is a 256-residue protein sequence, read N- to C-terminus: EF-hand calcium-binding domain-containing protein 4A (256 aa).

Basic residues predominate over residues 1–10 (MAHLGSRRRM). Positions 1–32 (MAHLGSRRRMSPGLRTRIAHRKAHRTPPSPLI) are disordered. 2 consecutive EF-hand domains span residues 41 to 69 (KAHE…QNEL) and 71 to 106 (LTPE…LLGV). Asp84, Ser86, Asn88, Tyr90, and Glu95 together coordinate Ca(2+). A coiled-coil region spans residues 190-235 (IRDVHHEKDTLEQALKRKETDHGREVRCLYEEMEQQIKIERERLLK).

The protein belongs to the EFCAB4 family.

The chain is EF-hand calcium-binding domain-containing protein 4A (cracr2b) from Xenopus tropicalis (Western clawed frog).